Here is a 504-residue protein sequence, read N- to C-terminus: MTADPDPPFVAVWNSVVAELNGDVNGDRQGDPSLPVLTPQQRAWLKLVKPLVIAEGFALLSVPTPFVQNEIERHLREPIVTALSRKLGQRVELGVRIATPTDEPEDAPDSFADSPAPASVPAGPADADEIDDDRDARVNAQESWPKYFSRPEPDTSSDDSNAVNLNRRYTFDTFVIGASNRFAHAATLAIAEAPARAYNPLFIWGESGLGKTHLLHAAGNYAQRLFPGMRVKYVSTEEFTNDFINSLRDDRKASFKRSYRDIDILLVDDIQFIEGKEGIQEEFFHTFNTLHNSNKQIVISSDRPPKQLATLEDRLRTRFEWGLITDVQPPELETRIAILRKKAQMDRLDVPDDVLELIASSIERNIRELEGALIRVTAFASLNKTRIDRSLAEVVLRDLIADATTMQISTAAIMAVTAEYFETTVEELRGPGKTRALAQSRQIAMYLCRELTDLSLPKIGQAFGRDHTTVMYAEKKIRGEMAERREVFDHVKELTTRIRQRAKR.

The segment at 1-109 (MTADPDPPFV…PTDEPEDAPD (109 aa)) is domain I, interacts with DnaA modulators. A disordered region spans residues 98–162 (ATPTDEPEDA…PDTSSDDSNA (65 aa)). The span at 109 to 125 (DSFADSPAPASVPAGPA) shows a compositional bias: low complexity. Residues 110–163 (SFADSPAPASVPAGPADADEIDDDRDARVNAQESWPKYFSRPEPDTSSDDSNAV) are domain II. The tract at residues 164-380 (NLNRRYTFDT…GALIRVTAFA (217 aa)) is domain III, AAA+ region. ATP-binding residues include G208, G210, K211, and T212. Positions 381 to 504 (SLNKTRIDRS…TTRIRQRAKR (124 aa)) are domain IV, binds dsDNA.

It belongs to the DnaA family. In terms of assembly, oligomerizes as a right-handed, spiral filament on DNA at oriC.

Its subcellular location is the cytoplasm. Its function is as follows. Plays an essential role in the initiation and regulation of chromosomal replication. ATP-DnaA binds to the origin of replication (oriC) to initiate formation of the DNA replication initiation complex once per cell cycle. Binds the DnaA box (a 9 base pair repeat at the origin) and separates the double-stranded (ds)DNA. Forms a right-handed helical filament on oriC DNA; dsDNA binds to the exterior of the filament while single-stranded (ss)DNA is stabiized in the filament's interior. The ATP-DnaA-oriC complex binds and stabilizes one strand of the AT-rich DNA unwinding element (DUE), permitting loading of DNA polymerase. After initiation quickly degrades to an ADP-DnaA complex that is not apt for DNA replication. Binds acidic phospholipids. The probable consensus sequence for the DnaA box of this bacterium is 5'-TT(G/C)TCCACA-3'. This is Chromosomal replication initiator protein DnaA from Mycolicibacterium smegmatis (strain ATCC 700084 / mc(2)155) (Mycobacterium smegmatis).